The following is a 189-amino-acid chain: Glycerol-3-phosphate acyltransferase (189 aa).

5 helical membrane passes run 1–21, 50–70, 72–92, 111–131, and 151–171; these read MVWLLAILAYLLGSLSFAVLL, KLAILTLLGDVGKGLLPVLVA, WLGLGVMEEAWVGIAAVIGHL, MLLGLYPPAVLLAAAAWLLTF, and LLAWQQPGALLPMTVLTALIV.

It belongs to the PlsY family. Probably interacts with PlsX.

It is found in the cell inner membrane. The enzyme catalyses an acyl phosphate + sn-glycerol 3-phosphate = a 1-acyl-sn-glycero-3-phosphate + phosphate. Its pathway is lipid metabolism; phospholipid metabolism. Catalyzes the transfer of an acyl group from acyl-phosphate (acyl-PO(4)) to glycerol-3-phosphate (G3P) to form lysophosphatidic acid (LPA). This enzyme utilizes acyl-phosphate as fatty acyl donor, but not acyl-CoA or acyl-ACP. The chain is Glycerol-3-phosphate acyltransferase from Pseudomonas paraeruginosa (strain DSM 24068 / PA7) (Pseudomonas aeruginosa (strain PA7)).